The sequence spans 310 residues: L-lactate dehydrogenase (310 aa).

Residues Val11, Asp32, Tyr62, and 76 to 77 (GV) contribute to the NAD(+) site. Substrate-binding positions include Gln79, Arg85, and 117–120 (NPVD). NAD(+)-binding positions include 115 to 117 (ATN) and Ser140. Residue 145 to 148 (DTAR) participates in substrate binding. The beta-D-fructose 1,6-bisphosphate site is built by Arg150 and His165. His172 acts as the Proton acceptor in catalysis. Tyr218 carries the phosphotyrosine modification. Residue Thr227 coordinates substrate.

It belongs to the LDH/MDH superfamily. LDH family. In terms of assembly, homotetramer.

Its subcellular location is the cytoplasm. It catalyses the reaction (S)-lactate + NAD(+) = pyruvate + NADH + H(+). It functions in the pathway fermentation; pyruvate fermentation to lactate; (S)-lactate from pyruvate: step 1/1. With respect to regulation, allosterically activated by fructose 1,6-bisphosphate (FBP). In terms of biological role, catalyzes the conversion of lactate to pyruvate. This chain is L-lactate dehydrogenase, found in Thermus thermophilus (strain ATCC BAA-163 / DSM 7039 / HB27).